The primary structure comprises 523 residues: UDP-N-acetylmuramyl-tripeptide synthetase (523 aa).

Ser-38 provides a ligand contact to UDP-N-acetyl-alpha-D-muramoyl-L-alanyl-D-glutamate. Residue 116-122 (GTKGKTT) coordinates ATP. Residues 162–163 (TT), Ser-189, and Arg-197 contribute to the UDP-N-acetyl-alpha-D-muramoyl-L-alanyl-D-glutamate site. The residue at position 231 (Lys-231) is an N6-carboxylysine.

The protein belongs to the MurCDEF family. MurE subfamily. Post-translationally, carboxylation is probably crucial for Mg(2+) binding and, consequently, for the gamma-phosphate positioning of ATP.

It is found in the cytoplasm. It participates in cell wall biogenesis; peptidoglycan biosynthesis. Catalyzes the addition of an amino acid to the nucleotide precursor UDP-N-acetylmuramoyl-L-alanyl-D-glutamate (UMAG) in the biosynthesis of bacterial cell-wall peptidoglycan. The protein is UDP-N-acetylmuramyl-tripeptide synthetase of Lactobacillus acidophilus (strain ATCC 700396 / NCK56 / N2 / NCFM).